We begin with the raw amino-acid sequence, 84 residues long: Large ribosomal subunit protein bL27 (84 aa).

Residues 1–22 (MAHKKAGGSTRNGRDSESKRLG) are disordered.

This sequence belongs to the bacterial ribosomal protein bL27 family.

The chain is Large ribosomal subunit protein bL27 from Shewanella pealeana (strain ATCC 700345 / ANG-SQ1).